The chain runs to 145 residues: D-aminoacyl-tRNA deacylase (145 aa).

The Gly-cisPro motif, important for rejection of L-amino acids motif lies at 137-138; sequence GP.

This sequence belongs to the DTD family. In terms of assembly, homodimer.

The protein localises to the cytoplasm. The catalysed reaction is glycyl-tRNA(Ala) + H2O = tRNA(Ala) + glycine + H(+). It catalyses the reaction a D-aminoacyl-tRNA + H2O = a tRNA + a D-alpha-amino acid + H(+). An aminoacyl-tRNA editing enzyme that deacylates mischarged D-aminoacyl-tRNAs. Also deacylates mischarged glycyl-tRNA(Ala), protecting cells against glycine mischarging by AlaRS. Acts via tRNA-based rather than protein-based catalysis; rejects L-amino acids rather than detecting D-amino acids in the active site. By recycling D-aminoacyl-tRNA to D-amino acids and free tRNA molecules, this enzyme counteracts the toxicity associated with the formation of D-aminoacyl-tRNA entities in vivo and helps enforce protein L-homochirality. The polypeptide is D-aminoacyl-tRNA deacylase (Lactobacillus helveticus (strain DPC 4571)).